The primary structure comprises 1208 residues: Transient receptor potential cation channel subfamily M member 4 (1208 aa).

Over Met-1–Ala-776 the chain is Cytoplasmic. 3 residues coordinate ATP: Arg-172, Arg-215, and Leu-226. Ca(2+)-binding residues include Asp-271, Ala-393, Asp-396, and Glu-397. ATP-binding residues include Arg-422 and Gly-449. Ser-527 and Ser-538 each carry phosphoserine. A helical transmembrane segment spans residues Phe-777–Val-797. The Extracellular portion of the chain corresponds to Asp-798–Glu-808. Residues Leu-809–Gly-829 traverse the membrane as a helical segment. Residues Glu-822 and Gln-825 each contribute to the Ca(2+) site. Topologically, residues Gly-830 to Thr-857 are cytoplasmic. Residues Trp-858–Thr-878 traverse the membrane as a helical segment. The Ca(2+) site is built by Asn-859 and Asp-862. The Extracellular portion of the chain corresponds to Pro-879–Gly-880. Residues Leu-881–Phe-904 traverse the membrane as a helical segment. At Thr-905–Val-924 the chain is on the cytoplasmic side. A helical membrane pass occupies residues Phe-925–Ile-945. The Extracellular segment spans residues Leu-946–Leu-957. Residues Arg-958–Asp-978 constitute an intramembrane region (pore-forming). The Selectivity filter signature appears at Phe-969 to Gln-971. Residues Val-979 to Leu-1013 are Extracellular-facing. A disulfide bridge connects residues Cys-987 and Cys-1005. The chain crosses the membrane as a helical span at residues Val-1014 to Ile-1034. At Ala-1035–Asp-1208 the chain is on the cytoplasmic side. Positions Ala-1070–Glu-1170 are calmodulin-binding. The stretch at Leu-1128–Leu-1180 forms a coiled coil. Residues Gln-1130–Arg-1135 form a mediates modulation by decavanadate and PIP2-binding region. Phosphoserine; by PKC is present on residues Ser-1139 and Ser-1146. The disordered stretch occupies residues His-1189–Asp-1208. Over residues Pro-1195–Asp-1208 the composition is skewed to pro residues.

Belongs to the transient receptor (TC 1.A.4) family. LTrpC subfamily. TRPM4 sub-subfamily. In terms of assembly, homotetramer. In terms of processing, phosphorylation by PKC leads to increase the sensitivity to Ca(2+). Post-translationally, sumoylated. Desumoylated by SENP1. As to expression, isoform 1 is highly expressed in the testis with a moderate expression in the brain, spleen and thymus. Isoform 2 is only expressed in the brain and spleen.

It localises to the cell membrane. The protein localises to the endoplasmic reticulum. Its subcellular location is the golgi apparatus. It catalyses the reaction Na(+)(in) = Na(+)(out). It carries out the reaction K(+)(in) = K(+)(out). With respect to regulation, gating is voltage-dependent and repressed by decavanadate. Calmodulin-binding confers the Ca(2+) sensitivity. ATP is able to restore Ca(2+) sensitivity after desensitization. Phosphatidylinositol 4,5-bisphosphate (PIP2)-binding strongly enhances activity, by increasing the channel's Ca(2+) sensitivity and shifting its voltage dependence of activation towards negative potentials. Activity is also enhanced by 3,5-bis(trifluoromethyl)pyrazole derivative (BTP2). Exhibits pronounced temperature sensitivity, with activities strongly intensifying near physiological temperatures. TRPM4 can adopt distinct conformations at different temperatures, markedly influencing where and how ligands interact with them. Calcium-activated selective cation channel that mediates membrane depolarization. While it is activated by increase in intracellular Ca(2+), it is impermeable to it. Mediates transport of monovalent cations (Na(+) &gt; K(+) &gt; Cs(+) &gt; Li(+)), leading to depolarize the membrane. It thereby plays a central role in cadiomyocytes, neurons from entorhinal cortex, dorsal root and vomeronasal neurons, endocrine pancreas cells, kidney epithelial cells, cochlea hair cells etc. Participates in T-cell activation by modulating Ca(2+) oscillations after T lymphocyte activation, which is required for NFAT-dependent IL2 production. Involved in myogenic constriction of cerebral arteries. Controls insulin secretion in pancreatic beta-cells. May also be involved in pacemaking or could cause irregular electrical activity under conditions of Ca(2+) overload. Affects T-helper 1 (Th1) and T-helper 2 (Th2) cell motility and cytokine production through differential regulation of calcium signaling and NFATC1 localization. Enhances cell proliferation through up-regulation of the beta-catenin signaling pathway. Plays a role in keratinocyte differentiation. In terms of biological role, lacks channel activity. In Rattus norvegicus (Rat), this protein is Transient receptor potential cation channel subfamily M member 4 (Trpm4).